We begin with the raw amino-acid sequence, 75 residues long: Exodeoxyribonuclease 7 small subunit (75 aa).

The protein belongs to the XseB family. In terms of assembly, heterooligomer composed of large and small subunits.

Its subcellular location is the cytoplasm. The catalysed reaction is Exonucleolytic cleavage in either 5'- to 3'- or 3'- to 5'-direction to yield nucleoside 5'-phosphates.. Its function is as follows. Bidirectionally degrades single-stranded DNA into large acid-insoluble oligonucleotides, which are then degraded further into small acid-soluble oligonucleotides. In Anaplasma phagocytophilum (strain HZ), this protein is Exodeoxyribonuclease 7 small subunit.